The sequence spans 263 residues: Endonuclease 8 (263 aa).

The Schiff-base intermediate with DNA role is filled by proline 2. The Proton donor role is filled by glutamate 3. The active-site Proton donor; for beta-elimination activity is lysine 53. Positions 70, 125, and 169 each coordinate DNA. Residues 229–263 (KVFHRDGEACERCGGIIEKTTLSSRPFYWCAHCQK) form an FPG-type zinc finger. The active-site Proton donor; for delta-elimination activity is the arginine 253.

It belongs to the FPG family. Zn(2+) is required as a cofactor.

The enzyme catalyses 2'-deoxyribonucleotide-(2'-deoxyribose 5'-phosphate)-2'-deoxyribonucleotide-DNA = a 3'-end 2'-deoxyribonucleotide-(2,3-dehydro-2,3-deoxyribose 5'-phosphate)-DNA + a 5'-end 5'-phospho-2'-deoxyribonucleoside-DNA + H(+). Involved in base excision repair of DNA damaged by oxidation or by mutagenic agents. Acts as a DNA glycosylase that recognizes and removes damaged bases. Has a preference for oxidized pyrimidines, such as thymine glycol, 5,6-dihydrouracil and 5,6-dihydrothymine. Has AP (apurinic/apyrimidinic) lyase activity and introduces nicks in the DNA strand. Cleaves the DNA backbone by beta-delta elimination to generate a single-strand break at the site of the removed base with both 3'- and 5'-phosphates. In Salmonella typhi, this protein is Endonuclease 8.